A 151-amino-acid chain; its full sequence is S-ribosylhomocysteine lyase (151 aa).

Positions 54, 58, and 121 each coordinate Fe cation.

The protein belongs to the LuxS family. In terms of assembly, homodimer. Fe cation serves as cofactor.

The enzyme catalyses S-(5-deoxy-D-ribos-5-yl)-L-homocysteine = (S)-4,5-dihydroxypentane-2,3-dione + L-homocysteine. Functionally, involved in the synthesis of autoinducer 2 (AI-2) which is secreted by bacteria and is used to communicate both the cell density and the metabolic potential of the environment. The regulation of gene expression in response to changes in cell density is called quorum sensing. Catalyzes the transformation of S-ribosylhomocysteine (RHC) to homocysteine (HC) and 4,5-dihydroxy-2,3-pentadione (DPD). This Clostridioides difficile (strain 630) (Peptoclostridium difficile) protein is S-ribosylhomocysteine lyase.